The primary structure comprises 156 residues: Cyanate hydratase (156 aa).

Residues Arg-96, Glu-99, and Ser-122 contribute to the active site.

This sequence belongs to the cyanase family.

It carries out the reaction cyanate + hydrogencarbonate + 3 H(+) = NH4(+) + 2 CO2. Its function is as follows. Catalyzes the reaction of cyanate with bicarbonate to produce ammonia and carbon dioxide. This chain is Cyanate hydratase, found in Burkholderia mallei (strain NCTC 10247).